The primary structure comprises 321 residues: Methionyl-tRNA formyltransferase (321 aa).

(6S)-5,6,7,8-tetrahydrofolate is bound at residue 111–114 (GLLP).

Belongs to the Fmt family.

The enzyme catalyses L-methionyl-tRNA(fMet) + (6R)-10-formyltetrahydrofolate = N-formyl-L-methionyl-tRNA(fMet) + (6S)-5,6,7,8-tetrahydrofolate + H(+). In terms of biological role, attaches a formyl group to the free amino group of methionyl-tRNA(fMet). The formyl group appears to play a dual role in the initiator identity of N-formylmethionyl-tRNA by promoting its recognition by IF2 and preventing the misappropriation of this tRNA by the elongation apparatus. In Chlamydia pneumoniae (Chlamydophila pneumoniae), this protein is Methionyl-tRNA formyltransferase.